The primary structure comprises 447 residues: Protein cereblon (447 aa).

2 stretches are compositionally biased toward acidic residues: residues 1 to 10 (MADDEGEEDP) and 25 to 34 (ESEEEDEMEL). Residues 1–47 (MADDEGEEDPGINNMGNLLQVISSESEEEDEMELEDAKTADSESPNI) are disordered. Positions 82–322 (IPVLPHVQVM…CELDIMSKCT (241 aa)) constitute a Lon N-terminal domain. Residues 321–429 (CTSLCCKHCP…LTRSALQPRI (109 aa)) form the CULT domain. The Zn(2+) site is built by Cys326 and Cys329. Residues Trp383 and Trp389 each coordinate (S)-thalidomide. Cys394 and Cys397 together coordinate Zn(2+).

The protein belongs to the CRBN family. As to quaternary structure, component of a DCX (DDB1-CUL4-X-box) protein ligase complex.

It is found in the cytoplasm. Its subcellular location is the nucleus. It functions in the pathway protein modification; protein ubiquitination. Its function is as follows. Substrate recognition component of a DCX (DDB1-CUL4-X-box) E3 protein ligase complex that mediates the ubiquitination and subsequent proteasomal degradation of target proteins, such as MEIS2. Normal degradation of key regulatory proteins is required for normal limb outgrowth and expression of the fibroblast growth factor FGF8. Maintains presynaptic glutamate release and consequently cognitive functions, such as memory and learning, by negatively regulating large-conductance calcium-activated potassium (BK) channels in excitatory neurons. Likely to function by regulating the assembly and neuronal surface expression of BK channels via its interaction with KCNT1. May also be involved in regulating anxiety-like behaviors via a BK channel-independent mechanism. In Xenopus tropicalis (Western clawed frog), this protein is Protein cereblon (crbn).